Reading from the N-terminus, the 757-residue chain is NAD(P)H-quinone oxidoreductase subunit 5, chloroplastic (757 aa).

A run of 17 helical transmembrane segments spans residues 9–29 (WIIP…LLLV), 40–60 (WAFP…DLSV), 89–109 (IDPL…MVLI), 122–139 (LRFF…LGLV), 147–167 (IYIF…FWFT), 185–205 (GDFG…SFEF), 219–239 (NGVN…GAVA), 258–278 (TPIS…FLVA), 280–300 (LLPL…IGVI), 327–347 (LGYI…FHLI), 354–374 (ALLF…VGYS), 396–416 (MTFL…CFWS), 425–445 (WLYS…TAFY), 544–564 (LLPL…GIPF), 607–627 (SIAY…YLFF), 692–712 (GIMN…KYLG), and 718–738 (SYLF…IFFF).

This sequence belongs to the complex I subunit 5 family. NDH is composed of at least 16 different subunits, 5 of which are encoded in the nucleus.

The protein localises to the plastid. It localises to the chloroplast thylakoid membrane. It catalyses the reaction a plastoquinone + NADH + (n+1) H(+)(in) = a plastoquinol + NAD(+) + n H(+)(out). The catalysed reaction is a plastoquinone + NADPH + (n+1) H(+)(in) = a plastoquinol + NADP(+) + n H(+)(out). Functionally, NDH shuttles electrons from NAD(P)H:plastoquinone, via FMN and iron-sulfur (Fe-S) centers, to quinones in the photosynthetic chain and possibly in a chloroplast respiratory chain. The immediate electron acceptor for the enzyme in this species is believed to be plastoquinone. Couples the redox reaction to proton translocation, and thus conserves the redox energy in a proton gradient. The polypeptide is NAD(P)H-quinone oxidoreductase subunit 5, chloroplastic (ndhF) (Drimys granadensis).